A 160-amino-acid chain; its full sequence is Protein-export protein SecB (160 aa).

This sequence belongs to the SecB family. As to quaternary structure, homotetramer, a dimer of dimers. One homotetramer interacts with 1 SecA dimer.

It is found in the cytoplasm. Functionally, one of the proteins required for the normal export of preproteins out of the cell cytoplasm. It is a molecular chaperone that binds to a subset of precursor proteins, maintaining them in a translocation-competent state. It also specifically binds to its receptor SecA. This chain is Protein-export protein SecB, found in Nitrosomonas eutropha (strain DSM 101675 / C91 / Nm57).